Consider the following 638-residue polypeptide: Chaperone protein DnaK (638 aa).

Threonine 196 carries the post-translational modification Phosphothreonine; by autocatalysis. A disordered region spans residues 592-638 (ASNLYQQPGAEAGAAPQPETNGQQESKGGDGAVNAEYEVIDGDDDKK). Low complexity predominate over residues 597-610 (QQPGAEAGAAPQPE). Residues 629–638 (EVIDGDDDKK) show a composition bias toward acidic residues.

It belongs to the heat shock protein 70 family.

Its function is as follows. Acts as a chaperone. The chain is Chaperone protein DnaK from Chlorobaculum parvum (strain DSM 263 / NCIMB 8327) (Chlorobium vibrioforme subsp. thiosulfatophilum).